Reading from the N-terminus, the 968-residue chain is MATPSMMPQWSYMHISGQDASEYLSPGLVQFARATETYFSLNNKFRNPTVAPTHDVTTDRSQRLTLRFIPVDREDTAYSYKARFTLAVGDNRVLDMASTYFDIRGVLDRGPTFKPYSGTAYNALAPKGAPNSCEWEQTEDSGRAVAEDEEEEDEDEEEEEEEQNARDQATKKTHVYAQAPLSGETITKSGLQIGSDNAETQAKPVYADPSYQPEPQIGESQWNEADANAAGGRVLKKTTPMKPCYGSYARPTNPFGGQSVLVPDEKGVPLPKVDLQFFSNTTSLNDRQGNATKPKVVLYSEDVNMETPDTHLSYKPGKGDENSKAMLGQQSMPNRPNYIAFRDNFIGLMYYNSTGNMGVLAGQASQLNAVVDLQDRNTELSYQLLLDSIGDRTRYFSMWNQAVDSYDPDVRIIENHGTEDELPNYCFPLGGIGVTDTYQAIKANGNGSGDNGDTTWTKDETFATRNEIGVGNNFAMEINLNANLWRNFLYSNIALYLPDKLKYNPTNVEISDNPNTYDYMNKRVVAPGLVDCYINLGARWSLDYMDNVNPFNHHRNAGLRYRSMLLGNGRYVPFHIQVPQKFFAIKNLLLLPGSYTYEWNFRKDVNMVLQSSLGNDLRVDGASIKFDSICLYATFFPMAHNTASTLEAMLRNDTNDQSFNDYLSAANMLYPIPANATNVPISIPSRNWAAFRGWAFTRLKTKETPSLGSGYDPYYTYSGSIPYLDGTFYLNHTFKKVAITFDSSVSWPGNDRLLTPNEFEIKRSVDGEGYNVAQCNMTKDWFLVQMLANYNIGYQGFYIPESYKDRMYSFFRNFQPMSRQVVDDTKYKEYQQVGILHQHNNSGFVGYLAPTMREGQAYPANVPYPLIGKTAVDSITQKKFLCDRTLWRIPFSSNFMSMGALTDLGQNLLYANSAHALDMTFEVDPMDEPTLLYVLFEVFDVVRVHQPHRGVIETVYLRTPFSAGNATT.

An N-acetylalanine; by host modification is found at alanine 2. Positions 125 to 188 (APKGAPNSCE…APLSGETITK (64 aa)) are disordered. The span at 147–162 (EDEEEEDEDEEEEEEE) shows a compositional bias: acidic residues. Phosphoserine; by host occurs at positions 182 and 283. The residue at position 956 (tyrosine 956) is a Phosphotyrosine; by host.

The protein belongs to the adenoviridae hexon protein family. Homotrimer. Interacts with the capsid vertex protein; this interaction binds the peripentonal hexons to the neighboring penton base. Interacts with the hexon-linking protein; this interaction tethers the hexons surrounding the penton to those situated in the central plate of the facet. Interacts with the hexon-interlacing protein; this interaction lashes the hexons together. Interacts with pre-protein VI; this interaction probably allows nuclear import of hexon trimers and possibly pre-capsid assembly. Interacts with host dyneins DYNC1LI1 and DYNC1I2; this interaction might be involved in intracellular microtubule-dependent transport of incoming viral capsid. Interacts with the shutoff protein; this interaction allows folding and formation of hexons trimers. Interacts with host NUP214 (via N-terminus); this interaction might be essential for the release of the virus genome to the nucleus.

The protein resides in the virion. It is found in the host nucleus. Major capsid protein that self-associates to form 240 hexon trimers, each in the shape of a hexagon, building most of the pseudo T=25 capsid. Assembled into trimeric units with the help of the chaperone shutoff protein. Transported by pre-protein VI to the nucleus where it associates with other structural proteins to form an empty capsid. Might be involved, through its interaction with host dyneins, in the intracellular microtubule-dependent transport of incoming viral capsid to the nucleus. This is Hexon protein from Homo sapiens (Human).